Here is a 209-residue protein sequence, read N- to C-terminus: Superoxide dismutase [Mn/Fe] (209 aa).

Fe(3+)-binding residues include His-38, His-90, Asp-172, and His-176. Residues His-38, His-90, Asp-172, and His-176 each coordinate Mn(2+).

Belongs to the iron/manganese superoxide dismutase family. Requires Mn(2+) as cofactor. Fe(3+) serves as cofactor.

It carries out the reaction 2 superoxide + 2 H(+) = H2O2 + O2. Its function is as follows. Destroys superoxide anion radicals which are normally produced within the cells and which are toxic to biological systems. Catalyzes the dismutation of superoxide anion radicals into O2 and H2O2 by successive reduction and oxidation of the transition metal ion at the active site. This is Superoxide dismutase [Mn/Fe] (sodB) from Rickettsia conorii (strain ATCC VR-613 / Malish 7).